Reading from the N-terminus, the 87-residue chain is MTILKNQINKGIIFLIRCYQKYISPMFPPTCRYYPTCSNYAIDAIKKHGIVKGIIMGIFRILRCNPFVEGGVDVVPEKFTIFRNDDK.

This sequence belongs to the UPF0161 family.

It is found in the cell membrane. Functionally, could be involved in insertion of integral membrane proteins into the membrane. This chain is Putative membrane protein insertion efficiency factor, found in Ligilactobacillus salivarius (strain UCC118) (Lactobacillus salivarius).